The primary structure comprises 222 residues: Beta-casein (222 aa).

Positions 1-15 (MKVLILACLVALALA) are cleaved as a signal peptide. Position 27 is a phosphothreonine (T27). Phosphoserine is present on residues S30, S32, S33, and S34.

The protein belongs to the beta-casein family. As to expression, mammary gland specific. Secreted in milk.

It localises to the secreted. Important role in determination of the surface properties of the casein micelles. In Ovis aries (Sheep), this protein is Beta-casein (CSN2).